The primary structure comprises 33 residues: Dermaseptin-H6 (33 aa).

Leucine 33 carries the post-translational modification Leucine amide.

In terms of tissue distribution, expressed by the skin glands.

The protein localises to the secreted. Functionally, has antimicrobial activity. This is Dermaseptin-H6 from Pithecopus hypochondrialis (Orange-legged leaf frog).